Consider the following 438-residue polypeptide: Aspartate--tRNA(Asp/Asn) ligase (438 aa).

Position 176 (glutamate 176) interacts with L-aspartate. The aspartate stretch occupies residues 198–201 (QLYK). Arginine 220 is a binding site for L-aspartate. ATP contacts are provided by residues 220–222 (RAE), 228–230 (RHL), and glutamate 361. Positions 361 and 364 each coordinate Mg(2+). Residues serine 364 and arginine 368 each coordinate L-aspartate. An ATP-binding site is contributed by 409–412 (GADR).

This sequence belongs to the class-II aminoacyl-tRNA synthetase family. Type 2 subfamily. In terms of assembly, homodimer. It depends on Mg(2+) as a cofactor.

It is found in the cytoplasm. It catalyses the reaction tRNA(Asx) + L-aspartate + ATP = L-aspartyl-tRNA(Asx) + AMP + diphosphate. Functionally, aspartyl-tRNA synthetase with relaxed tRNA specificity since it is able to aspartylate not only its cognate tRNA(Asp) but also tRNA(Asn). Reaction proceeds in two steps: L-aspartate is first activated by ATP to form Asp-AMP and then transferred to the acceptor end of tRNA(Asp/Asn). The sequence is that of Aspartate--tRNA(Asp/Asn) ligase from Methanocaldococcus jannaschii (strain ATCC 43067 / DSM 2661 / JAL-1 / JCM 10045 / NBRC 100440) (Methanococcus jannaschii).